The primary structure comprises 239 residues: 1-(5-phosphoribosyl)-5-[(5-phosphoribosylamino)methylideneamino] imidazole-4-carboxamide isomerase (239 aa).

The active-site Proton acceptor is Asp-8. Catalysis depends on Asp-130, which acts as the Proton donor.

Belongs to the HisA/HisF family.

Its subcellular location is the cytoplasm. It catalyses the reaction 1-(5-phospho-beta-D-ribosyl)-5-[(5-phospho-beta-D-ribosylamino)methylideneamino]imidazole-4-carboxamide = 5-[(5-phospho-1-deoxy-D-ribulos-1-ylimino)methylamino]-1-(5-phospho-beta-D-ribosyl)imidazole-4-carboxamide. It participates in amino-acid biosynthesis; L-histidine biosynthesis; L-histidine from 5-phospho-alpha-D-ribose 1-diphosphate: step 4/9. The polypeptide is 1-(5-phosphoribosyl)-5-[(5-phosphoribosylamino)methylideneamino] imidazole-4-carboxamide isomerase (Streptococcus thermophilus (strain ATCC BAA-491 / LMD-9)).